A 130-amino-acid chain; its full sequence is Small ribosomal subunit protein uS9 (130 aa).

Positions 98-130 (LKRAGFLTRDARKKERKKYGQPGARKRFQYSKR) are disordered. A compositionally biased stretch (basic residues) spans 111–130 (KERKKYGQPGARKRFQYSKR).

This sequence belongs to the universal ribosomal protein uS9 family.

This Sorangium cellulosum (strain So ce56) (Polyangium cellulosum (strain So ce56)) protein is Small ribosomal subunit protein uS9.